Reading from the N-terminus, the 227-residue chain is PKHD-type hydroxylase BTH_II1201 (227 aa).

Residues 78–178 (KVFPPLFNRY…RVASFFWIQS (101 aa)) form the Fe2OG dioxygenase domain. 3 residues coordinate Fe cation: His96, Asp98, and His159. Position 169 (Arg169) interacts with 2-oxoglutarate.

Fe(2+) is required as a cofactor. Requires L-ascorbate as cofactor.

This chain is PKHD-type hydroxylase BTH_II1201, found in Burkholderia thailandensis (strain ATCC 700388 / DSM 13276 / CCUG 48851 / CIP 106301 / E264).